The sequence spans 109 residues: Homeobox protein E30 (109 aa).

Residues 1–12 (GPRTRRVKRSHN) are compositionally biased toward basic residues. The segment at 1–27 (GPRTRRVKRSHNGKNGSPEEKRPRTAF) is disordered. The homeobox DNA-binding region spans 20–79 (EKRPRTAFSAEQLARLKREFAENRYLTERRRQQLSRDLGLTEAQIKIWFQNKRAKIKKAS).

Belongs to the engrailed homeobox family.

Its subcellular location is the nucleus. This chain is Homeobox protein E30, found in Apis mellifera (Honeybee).